A 61-amino-acid chain; its full sequence is Ubiquinol-cytochrome c reductase complex assembly factor 6 (61 aa).

At 1–9 (MPAGVSWGQ) the chain is on the mitochondrial matrix side. The helical transmembrane segment at 10-32 (YLKFLGCALASMMAGSQAVHLYY) threads the bilayer. The Mitochondrial intermembrane segment spans residues 33–61 (KPLEDLRVYIEQEQHSTQVDPTAKPPESA).

This sequence belongs to the UQCC6 family. In terms of assembly, interacts with sloth1; the interaction stabilizes both components. Expressed in the brain.

It is found in the mitochondrion inner membrane. The protein resides in the mitochondrion. In terms of biological role, required for the assembly and stability of the mitochondrial ubiquinol-cytochrome c reductase complex (complex III (CIII) or cytochrome b-c1 complex), a multisubunit transmembrane complex that is part of the mitochondrial electron transport chain (ETC) which drives oxidative phosphorylation. This Drosophila melanogaster (Fruit fly) protein is Ubiquinol-cytochrome c reductase complex assembly factor 6.